A 145-amino-acid polypeptide reads, in one-letter code: Peptide methionine sulfoxide reductase MsrB (145 aa).

A MsrB domain is found at 6–129; sequence KNERLKQLTD…NSAALRFIPV (124 aa). Catalysis depends on Cys-118, which acts as the Nucleophile.

The protein belongs to the MsrB Met sulfoxide reductase family.

It carries out the reaction L-methionyl-[protein] + [thioredoxin]-disulfide + H2O = L-methionyl-(R)-S-oxide-[protein] + [thioredoxin]-dithiol. The sequence is that of Peptide methionine sulfoxide reductase MsrB from Listeria welshimeri serovar 6b (strain ATCC 35897 / DSM 20650 / CCUG 15529 / CIP 8149 / NCTC 11857 / SLCC 5334 / V8).